The following is a 188-amino-acid chain: Elongation factor P (188 aa).

Lysine 34 bears the N6-(3,6-diaminohexanoyl)-5-hydroxylysine mark.

The protein belongs to the elongation factor P family. In terms of processing, may be beta-lysylated on the epsilon-amino group of Lys-34 by the combined action of EpmA and EpmB, and then hydroxylated on the C5 position of the same residue by EpmC (if this protein is present). Lysylation is critical for the stimulatory effect of EF-P on peptide-bond formation. The lysylation moiety may extend toward the peptidyltransferase center and stabilize the terminal 3-CCA end of the tRNA. Hydroxylation of the C5 position on Lys-34 may allow additional potential stabilizing hydrogen-bond interactions with the P-tRNA.

Its subcellular location is the cytoplasm. Its pathway is protein biosynthesis; polypeptide chain elongation. Its function is as follows. Involved in peptide bond synthesis. Alleviates ribosome stalling that occurs when 3 or more consecutive Pro residues or the sequence PPG is present in a protein, possibly by augmenting the peptidyl transferase activity of the ribosome. Modification of Lys-34 is required for alleviation. The sequence is that of Elongation factor P from Actinobacillus pleuropneumoniae serotype 5b (strain L20).